A 474-amino-acid chain; its full sequence is Shugoshin-1 (474 aa).

4 disordered regions span residues 1–53 (MTST…KPNA), 189–226 (VESQ…NQGS), 322–356 (NSKQ…RCSK), and 422–442 (VSME…RKSN). Polar residues-rich tracts occupy residues 12 to 22 (GSLNPPHSNPS) and 190 to 201 (ESQSAVSSNTVC). The span at 211–220 (KRMPQRRRSS) shows a compositional bias: basic residues. 2 stretches are compositionally biased toward polar residues: residues 322–341 (NSKQ…NTVD) and 422–431 (VSMEQRTNQE).

Belongs to the shugoshin family. Highly expressed in tissues containing meiocytes. Expressed at much lower level in leaves and pollen-containing flowers.

The protein resides in the nucleus. The protein localises to the chromosome. It localises to the centromere. Plays a central role in chromosome cohesion during meiosis I by preventing premature dissociation of cohesin complex from centromeres after prophase, when most of cohesin complex dissociates from chromosomes arms. Required for maintenance of centromeric cohesion before prophase II and correct segregation of chromatids during meiosis II. Has apparently no function in mitosis. This is Shugoshin-1 from Zea mays (Maize).